The sequence spans 251 residues: Probable transcriptional regulatory protein MMAR_2098 (251 aa).

The protein belongs to the TACO1 family.

The protein resides in the cytoplasm. This Mycobacterium marinum (strain ATCC BAA-535 / M) protein is Probable transcriptional regulatory protein MMAR_2098.